A 1191-amino-acid polypeptide reads, in one-letter code: DNA-directed RNA polymerase II subunit RPB2 (1191 aa).

D799 is a binding site for Mg(2+). The tract at residues 842-903 (ASTMGMRHGS…RKDHSTSLRH (62 aa)) is disordered. Positions 878 to 891 (TPISQDDAQGQASR) are enriched in polar residues. Residues 893–903 (TRKDHSTSLRH) show a composition bias toward basic and acidic residues. C1123, C1126, C1141, and C1144 together coordinate Zn(2+). A C4-type zinc finger spans residues 1123 to 1144 (CERCGLIAIANLKKNSFECRGC).

Belongs to the RNA polymerase beta chain family. Component of the RNA polymerase II (Pol II) complex consisting of 12 subunits.

Its subcellular location is the nucleus. It catalyses the reaction RNA(n) + a ribonucleoside 5'-triphosphate = RNA(n+1) + diphosphate. Functionally, DNA-dependent RNA polymerase catalyzes the transcription of DNA into RNA using the four ribonucleoside triphosphates as substrates. Second largest component of RNA polymerase II which synthesizes mRNA precursors and many functional non-coding RNAs. Proposed to contribute to the polymerase catalytic activity and forms the polymerase active center together with the largest subunit. Pol II is the central component of the basal RNA polymerase II transcription machinery. It is composed of mobile elements that move relative to each other. RPB2 is part of the core element with the central large cleft, the clamp element that moves to open and close the cleft and the jaws that are thought to grab the incoming DNA template. In Solanum lycopersicum (Tomato), this protein is DNA-directed RNA polymerase II subunit RPB2 (RPB2).